The following is a 382-amino-acid chain: Lipid-A-disaccharide synthase (382 aa).

It belongs to the LpxB family.

It catalyses the reaction 2-N,3-O-bis[(3R)-3-hydroxytetradecanoyl]-alpha-D-glucosaminyl 1-phosphate + UDP-2-N,3-O-bis[(3R)-3-hydroxytetradecanoyl]-alpha-D-glucosamine = lipid A disaccharide (E. coli) + UDP + H(+). It carries out the reaction a lipid X + a UDP-2-N,3-O-bis[(3R)-3-hydroxyacyl]-alpha-D-glucosamine = a lipid A disaccharide + UDP + H(+). It functions in the pathway glycolipid biosynthesis; lipid IV(A) biosynthesis; lipid IV(A) from (3R)-3-hydroxytetradecanoyl-[acyl-carrier-protein] and UDP-N-acetyl-alpha-D-glucosamine: step 5/6. Condensation of UDP-2,3-diacylglucosamine and 2,3-diacylglucosamine-1-phosphate to form lipid A disaccharide, a precursor of lipid A, a phosphorylated glycolipid that anchors the lipopolysaccharide to the outer membrane of the cell. This Escherichia coli O157:H7 protein is Lipid-A-disaccharide synthase.